The sequence spans 1465 residues: Ankyrin and armadillo repeat-containing protein (1465 aa).

The helical transmembrane segment at 313–329 (MGYLKLICFLIPFLLSL) threads the bilayer. ANK repeat units lie at residues 532-561 (AGYA…NVNQ), 582-611 (NGPT…DYTL), 615-644 (RGWM…SLLE), 651-680 (NQCT…NWRK), and 684-714 (KGNN…ELPV). ARM repeat units lie at residues 745 to 784 (DRYW…NIST), 786 to 825 (VSIV…DVAK), 827 to 865 (ENKD…VLCM), 868 to 907 (ESNQ…EVAR), 910 to 949 (KEVQ…SLAN), and 1085 to 1125 (PMSQ…CIVL). The tract at residues 1431-1465 (KLGKDEQKANPDPPAFLNKLGKDEQNANPDPAESQ) is disordered.

The protein resides in the membrane. The polypeptide is Ankyrin and armadillo repeat-containing protein (Ankar) (Mus musculus (Mouse)).